The primary structure comprises 94 residues: uncharacterized protein (94 aa).

Helical transmembrane passes span 9–29 (TLAKIVCTVTLITLYFYFFST) and 34–54 (LIELAVQMFFALIGLFWVFIV).

The protein localises to the cell membrane. This is an uncharacterized protein from Bacillus subtilis (strain 168).